Here is a 262-residue protein sequence, read N- to C-terminus: Ribosomal RNA small subunit methyltransferase A (262 aa).

S-adenosyl-L-methionine is bound by residues His16, Leu18, Gly43, Glu64, Asp89, and Asn109.

It belongs to the class I-like SAM-binding methyltransferase superfamily. rRNA adenine N(6)-methyltransferase family. RsmA subfamily.

Its subcellular location is the cytoplasm. It catalyses the reaction adenosine(1518)/adenosine(1519) in 16S rRNA + 4 S-adenosyl-L-methionine = N(6)-dimethyladenosine(1518)/N(6)-dimethyladenosine(1519) in 16S rRNA + 4 S-adenosyl-L-homocysteine + 4 H(+). Functionally, specifically dimethylates two adjacent adenosines (A1518 and A1519) in the loop of a conserved hairpin near the 3'-end of 16S rRNA in the 30S particle. May play a critical role in biogenesis of 30S subunits. In Xanthomonas campestris pv. campestris (strain B100), this protein is Ribosomal RNA small subunit methyltransferase A.